The primary structure comprises 342 residues: Glycerol-3-phosphate dehydrogenase [NAD(P)+] (342 aa).

Trp-11, Arg-33, and Lys-112 together coordinate NADPH. Residues Lys-112, Gly-147, and Ser-149 each coordinate sn-glycerol 3-phosphate. Ala-151 lines the NADPH pocket. Residues Lys-202, Asp-255, Ser-265, Arg-266, and Asn-267 each contribute to the sn-glycerol 3-phosphate site. Lys-202 functions as the Proton acceptor in the catalytic mechanism. Arg-266 lines the NADPH pocket. NADPH is bound by residues Val-290 and Glu-292.

This sequence belongs to the NAD-dependent glycerol-3-phosphate dehydrogenase family.

It localises to the cytoplasm. It carries out the reaction sn-glycerol 3-phosphate + NAD(+) = dihydroxyacetone phosphate + NADH + H(+). The catalysed reaction is sn-glycerol 3-phosphate + NADP(+) = dihydroxyacetone phosphate + NADPH + H(+). It participates in membrane lipid metabolism; glycerophospholipid metabolism. Functionally, catalyzes the reduction of the glycolytic intermediate dihydroxyacetone phosphate (DHAP) to sn-glycerol 3-phosphate (G3P), the key precursor for phospholipid synthesis. In Cupriavidus metallidurans (strain ATCC 43123 / DSM 2839 / NBRC 102507 / CH34) (Ralstonia metallidurans), this protein is Glycerol-3-phosphate dehydrogenase [NAD(P)+].